Reading from the N-terminus, the 869-residue chain is Histone deacetylase 4 (869 aa).

Disordered regions lie at residues 1–25 (MEEA…PSTS), 128–167 (SSSN…TISQ), and 180–218 (RSKG…QVNV). Polar residues predominate over residues 184–202 (ESNSQSNLMSNSVTANGNG). Position 251 is a phosphoserine (Ser-251). The tract at residues 460-802 (CTTGLGYDQA…VQALIGESDD (343 aa)) is histone deacetylase. His-608 is an active-site residue.

It belongs to the histone deacetylase family. HD type 2 subfamily. In terms of assembly, interacts with mef-2. In terms of processing, phosphorylated by serine/threonine-protein kinase kin-29 at Ser-251; the phosphorylation inhibits repression of transcription by mef-2. May be phosphorylated by either cyclic-AMP dependent or cyclic-GMP dependent protein kinases. In terms of tissue distribution, expressed in body-wall muscle cells, hypodermal seam cells and neuronal cells including sensory amphid neuronal processes, the nerve ring, ventral nerve cords and motor neuronal commissures.

Its subcellular location is the nucleus. The catalysed reaction is N(6)-acetyl-L-lysyl-[histone] + H2O = L-lysyl-[histone] + acetate. Functionally, responsible for the deacetylation of lysine residues on the N-terminal part of the core histones (H2A, H2B, H3 and H4). Histone deacetylation gives a tag for epigenetic repression and plays an important role in transcriptional regulation, cell cycle progression and developmental events. Histone deacetylases act via the formation of large multiprotein complexes. Involved in transduction of sensory signals, together with egl-4, kin-29 and mef-2; binding to transcription factor mef-2 enables negative modulation of chemoreceptor gene expression in chemosensory neurons. May be involved in muscle development. This is Histone deacetylase 4 (hda-4) from Caenorhabditis elegans.